Here is a 364-residue protein sequence, read N- to C-terminus: GTPase Obg (364 aa).

The Obg domain maps to 1-159 (MKFLDEAKVY…KTIWLHLKLI (159 aa)). Residues 160–327 (ADAGLVGLPN…VLRALRDIIV (168 aa)) form the OBG-type G domain. Residues 166-173 (GLPNAGKS), 191-195 (FTTLH), 212-215 (DIPG), 279-282 (SQID), and 308-310 (SAV) each bind GTP. Residues serine 173 and threonine 193 each coordinate Mg(2+). The segment at 333–364 (EKPAKVPKLRHRDMVVTDEGEDKGGDEGDDQP) is disordered.

It belongs to the TRAFAC class OBG-HflX-like GTPase superfamily. OBG GTPase family. As to quaternary structure, monomer. Mg(2+) is required as a cofactor.

It localises to the cytoplasm. Its function is as follows. An essential GTPase which binds GTP, GDP and possibly (p)ppGpp with moderate affinity, with high nucleotide exchange rates and a fairly low GTP hydrolysis rate. Plays a role in control of the cell cycle, stress response, ribosome biogenesis and in those bacteria that undergo differentiation, in morphogenesis control. The polypeptide is GTPase Obg (Rhizobium johnstonii (strain DSM 114642 / LMG 32736 / 3841) (Rhizobium leguminosarum bv. viciae)).